The following is a 698-amino-acid chain: Probable xyloglucan glycosyltransferase 2 (698 aa).

2 consecutive transmembrane segments (helical) span residues 124 to 144 and 190 to 210; these read GFLA…WNGW and ILLF…CFWI. D272 is an active-site residue. Residues D331 and D333 each contribute to the substrate site. Residue D425 is part of the active site. Transmembrane regions (helical) follow at residues 503 to 523, 528 to 548, 653 to 668, and 673 to 693; these read LILP…TMFV, LPVW…ILPS, LALS…RSLL, and IHFY…LDLI.

This sequence belongs to the glycosyltransferase 2 family. Plant cellulose synthase-like C subfamily.

It is found in the golgi apparatus membrane. Functionally, probable beta-1,4-glucan synthase rather involved in the synthesis of the xyloglucan backbone than cellulose. Seems to work simultaneously with xyloglucan 6-xylosyltransferase. Xyloglucan is a noncellulosic polysaccharides of plant cell wall and consists of a glucan backbone substituted by xylose, galactose and fucose. The chain is Probable xyloglucan glycosyltransferase 2 (CSLC2) from Oryza sativa subsp. indica (Rice).